Reading from the N-terminus, the 951-residue chain is Exportin-2 (951 aa).

The region spanning 29-104 (ATSKIQKFVK…KSLLLNFILS (76 aa)) is the Importin N-terminal domain.

Belongs to the XPO2/CSE1 family.

It localises to the cytoplasm. The protein resides in the nucleus. Its function is as follows. Export receptor for importin alpha. Mediates importin-alpha re-export from the nucleus to the cytoplasm after import substrates have been released into the nucleoplasm. The protein is Exportin-2 (xpo2) of Dictyostelium discoideum (Social amoeba).